A 341-amino-acid polypeptide reads, in one-letter code: Ribulose-5-phosphate reductase (341 aa).

Residues Cys-38, His-64, Glu-65, and Glu-144 each coordinate Zn(2+).

The protein belongs to the zinc-containing alcohol dehydrogenase family. It depends on Zn(2+) as a cofactor.

It catalyses the reaction D-ribitol 5-phosphate + NADP(+) = D-ribulose 5-phosphate + NADPH + H(+). Its pathway is cell wall biogenesis; poly(ribitol phosphate) teichoic acid biosynthesis. In terms of biological role, catalyzes the NADPH dependent reduction of D-ribulose 5-phosphate to D-ribitol 5-phosphate. The polypeptide is Ribulose-5-phosphate reductase (Bacillus spizizenii (strain ATCC 23059 / NRRL B-14472 / W23) (Bacillus subtilis subsp. spizizenii)).